A 341-amino-acid chain; its full sequence is Biotin synthase (341 aa).

The 225-residue stretch at 40-264 (NSVKLNYLVN…VAPRSELRIA (225 aa)) folds into the Radical SAM core domain. 3 residues coordinate [4Fe-4S] cluster: cysteine 55, cysteine 59, and cysteine 62. [2Fe-2S] cluster-binding residues include cysteine 99, cysteine 132, cysteine 192, and arginine 262. The segment at 317–341 (ASAPQGGVEPVLRKRGAGTELQPNA) is disordered.

Belongs to the radical SAM superfamily. Biotin synthase family. In terms of assembly, homodimer. Requires [4Fe-4S] cluster as cofactor. The cofactor is [2Fe-2S] cluster.

The catalysed reaction is (4R,5S)-dethiobiotin + (sulfur carrier)-SH + 2 reduced [2Fe-2S]-[ferredoxin] + 2 S-adenosyl-L-methionine = (sulfur carrier)-H + biotin + 2 5'-deoxyadenosine + 2 L-methionine + 2 oxidized [2Fe-2S]-[ferredoxin]. It participates in cofactor biosynthesis; biotin biosynthesis; biotin from 7,8-diaminononanoate: step 2/2. In terms of biological role, catalyzes the conversion of dethiobiotin (DTB) to biotin by the insertion of a sulfur atom into dethiobiotin via a radical-based mechanism. The sequence is that of Biotin synthase from Renibacterium salmoninarum (strain ATCC 33209 / DSM 20767 / JCM 11484 / NBRC 15589 / NCIMB 2235).